A 472-amino-acid polypeptide reads, in one-letter code: Na(+)/H(+) antiporter NhaA (472 aa).

10 helical membrane passes run I24 to A44, L66 to L86, L108 to F128, G156 to A176, L196 to I216, V234 to G254, P290 to E310, M312 to G332, M361 to L381, and A392 to S412. The interval A422–H472 is disordered. Acidic residues predominate over residues A427–D436. The span at H445–P456 shows a compositional bias: low complexity.

The protein belongs to the NhaA Na(+)/H(+) (TC 2.A.33) antiporter family.

Its subcellular location is the cell membrane. The catalysed reaction is Na(+)(in) + 2 H(+)(out) = Na(+)(out) + 2 H(+)(in). Its function is as follows. Na(+)/H(+) antiporter that extrudes sodium in exchange for external protons. The chain is Na(+)/H(+) antiporter NhaA from Bifidobacterium longum (strain NCC 2705).